Consider the following 1972-residue polypeptide: TP53-binding protein 1 (1972 aa).

3 disordered regions span residues 24–273 (DSQP…VAAM), 290–332 (QIQK…CSLA), and 346–507 (GQRS…LGLS). Phosphoserine occurs at positions 25 and 63. The segment covering 82-91 (EHLKENKVAD) has biased composition (basic and acidic residues). Over residues 94 to 121 (DSSNLDTCGSISQVIEQLPQPNRTSSVL) the composition is skewed to polar residues. 2 positions are modified to phosphoserine: serine 105 and serine 124. The span at 138-149 (ELEQKEKEKEED) shows a compositional bias: basic and acidic residues. A compositionally biased stretch (polar residues) spans 151 to 168 (SGNTTHSLGAEDTASSQL). A phosphoserine mark is found at serine 166, serine 176, and serine 178. Polar residues predominate over residues 195 to 205 (LQSVTTNSGYT). Residue lysine 217 forms a Glycyl lysine isopeptide (Lys-Gly) (interchain with G-Cter in SUMO1); alternate linkage. Residue lysine 217 forms a Glycyl lysine isopeptide (Lys-Gly) (interchain with G-Cter in SUMO2); alternate linkage. Serine 222, serine 265, and serine 294 each carry phosphoserine. Composition is skewed to polar residues over residues 300 to 322 (LSTQ…CSTP) and 346 to 361 (GQRS…NSSD). A Phosphothreonine modification is found at threonine 302. Phosphoserine occurs at positions 366, 380, 395, 398, 429, 452, and 464. A compositionally biased stretch (polar residues) spans 426-441 (STVSPQASTPISQSTP). Residues 442–452 (VFPPGSLPIPS) show a composition bias toward pro residues. Positions 481 to 490 (HSSSLTVECS) are enriched in polar residues. Over residues 491–501 (KTSEIEPKNSP) the composition is skewed to basic and acidic residues. Phosphoserine is present on residues serine 500, serine 507, serine 518, serine 523, and serine 525. Positions 520 to 531 (SEYSQSPKMESL) are enriched in polar residues. Residues 520–556 (SEYSQSPKMESLSSHRIDEDGENTQIEDTEPMSPVLN) form a disordered region. Residues 538–549 (EDGENTQIEDTE) show a composition bias toward acidic residues. Phosphothreonine occurs at positions 543 and 548. Residues serine 552, serine 566, and serine 580 each carry the phosphoserine modification. Residues 568–595 (LMNPAQDGEVQLSQNDDKTKGDDTDTRD) are disordered. Residues 582–595 (NDDKTKGDDTDTRD) are compositionally biased toward basic and acidic residues. Phosphoserine is present on residues serine 630, serine 635, serine 639, and serine 640. The tract at residues 649–687 (EIKEHHPEEGSSGSEVEEIPETPCESQGEELKEENMESV) is disordered. Threonine 670 carries the phosphothreonine modification. A phosphoserine mark is found at serine 692, serine 724, serine 727, serine 771, serine 809, serine 830, serine 831, and serine 834. The disordered stretch occupies residues 742 to 911 (EQEAWEEATS…TPFHFTLPKE (170 aa)). The span at 798-816 (AENRLDTKEEKSVEYEGDL) shows a compositional bias: basic and acidic residues. Positions 839–848 (RADDPLRLDQ) are enriched in basic and acidic residues. Polar residues predominate over residues 849–864 (ELQQPQTQEKTSNSLT). Residue threonine 855 is modified to Phosphothreonine. Residue lysine 868 forms a Glycyl lysine isopeptide (Lys-Gly) (interchain with G-Cter in SUMO1); alternate linkage. A Glycyl lysine isopeptide (Lys-Gly) (interchain with G-Cter in SUMO2); alternate cross-link involves residue lysine 868. A compositionally biased stretch (polar residues) spans 890–902 (HASQSFCESSSET). Position 922 is a phosphothreonine (threonine 922). Lysine 930 is covalently cross-linked (Glycyl lysine isopeptide (Lys-Gly) (interchain with G-Cter in SUMO2)). Residues serine 970 and serine 975 each carry the phosphoserine modification. Residue lysine 984 forms a Glycyl lysine isopeptide (Lys-Gly) (interchain with G-Cter in SUMO2) linkage. Disordered stretches follow at residues 997-1028 (EASE…SVAS) and 1045-1103 (ENEA…VSPA). The segment covering 1018–1028 (GSTAVAESVAS) has biased composition (polar residues). Phosphoserine is present on serine 1028. Residue threonine 1056 is modified to Phosphothreonine. Position 1068 is a phosphoserine (serine 1068). The span at 1071-1083 (EEEKEKLEGDHTI) shows a compositional bias: basic and acidic residues. 4 positions are modified to phosphoserine: serine 1086, serine 1094, serine 1101, and serine 1114. A compositionally biased stretch (basic and acidic residues) spans 1127–1139 (DQKEGRSTNKENP). Disordered regions lie at residues 1127–1148 (DQKE…ERPS), 1188–1232 (NFGK…QPPH), and 1269–1478 (VTEE…DGLD). Serine 1148 bears the Phosphoserine mark. The span at 1188–1200 (NFGKQDATVQTER) shows a compositional bias: polar residues. Residue threonine 1214 is modified to Phosphothreonine. 2 positions are modified to phosphoserine: serine 1216 and serine 1219. Residues 1272-1285 (ETEEPIVECQECET) are compositionally biased toward acidic residues. 2 stretches are compositionally biased toward low complexity: residues 1298-1307 (DLGDISSFSS) and 1316-1329 (SSGT…SSGS). Serine 1317 and serine 1342 each carry phosphoserine. Arginine 1355 bears the Omega-N-methylarginine mark. Serine 1362 is modified (phosphoserine). A Glycyl lysine isopeptide (Lys-Gly) (interchain with G-Cter in SUMO2) cross-link involves residue lysine 1365. The residue at position 1368 (serine 1368) is a Phosphoserine. Threonine 1372 carries the post-translational modification Phosphothreonine. Positions 1396 to 1403 (RGRGRRGR) match the GAR motif. 2 positions are modified to phosphoserine: serine 1426 and serine 1430. Lysine 1434 is covalently cross-linked (Glycyl lysine isopeptide (Lys-Gly) (interchain with G-Cter in SUMO1); alternate). Residue lysine 1434 forms a Glycyl lysine isopeptide (Lys-Gly) (interchain with G-Cter in SUMO2); alternate linkage. Phosphoserine occurs at positions 1460, 1462, and 1474. A tudor-like region spans residues 1484–1603 (NSFVGLRVVA…NRLREQYGLG (120 aa)). Positions 1495–1523 (WSSNGYFYSGKITRDVGAGKYKLLFDDGY) are interaction with dimethylated histone H4. Lysine 1563 is covalently cross-linked (Glycyl lysine isopeptide (Lys-Gly) (interchain with G-Cter in SUMO1); alternate). Lysine 1563 is covalently cross-linked (Glycyl lysine isopeptide (Lys-Gly) (interchain with G-Cter in SUMO2); alternate). The UDR motif lies at 1604 to 1631 (PYEAVTPLTKAADISLDNLVEGKRKRRS). Threonine 1609 carries the phosphothreonine modification. Serine 1618, serine 1631, and serine 1635 each carry phosphoserine. 2 disordered regions span residues 1622 to 1719 (LVEG…EEQR) and 1745 to 1768 (LASR…FLEI). A compositionally biased stretch (low complexity) spans 1634 to 1650 (SSPATPTASSSSSTTPT). Phosphothreonine occurs at positions 1638 and 1648. 3 positions are modified to phosphoserine: serine 1656, serine 1673, and serine 1678. Residue lysine 1685 forms a Glycyl lysine isopeptide (Lys-Gly) (interchain with G-Cter in ubiquitin) linkage. Residues serine 1701, serine 1759, and serine 1778 each carry the phosphoserine modification. 2 consecutive BRCT domains span residues 1724-1848 (LNKT…NYLL) and 1864-1964 (PREN…QHPK).

In terms of assembly, homoligomer. Interacts with p53/TP53 (via the central domain). Interacts with DCLRE1C. Interacts with histone H2AX and this requires phosphorylation of H2AX on 'Ser-139'. Interacts with histone H4 that has been dimethylated at 'Lys-20' (H4K20me2). Has low affinity for histone H4 containing monomethylated 'Lys-20' (H4K20me1). Does not bind histone H4 containing unmethylated or trimethylated 'Lys-20' (H4K20me3). Has low affinity for histone H3 that has been dimethylated on 'Lys-79'. Has very low affinity for histone H3 that has been monomethylated on 'Lys-79' (in vitro). Does not bind unmethylated histone H3. Interacts with histone H2A monoubiquitinated at 'Lys-15' (H2AK15Ub). Interacts with PWWP3A/EXPAND1. Interacts with CHEK2; modulates CHEK2 phosphorylation at 'Thr-68' in response to infrared. Interacts with MSL1; this interaction may be required for MSL1 DNA repair activity, but not for histone acetyltransferase activity. Interacts (when phosphorylated by ATM) with RIF1. Interacts (via the Tudor-like domain) with NUDT16L1/TIRR; interaction masks the Tudor-like domain and prevents recruitment to chromatin. Interacts with PAXIP1. Interacts with SHLD2. Interacts (when phosphorylated) with TOPBP1. Interacts with GFI1; promoting methylation by PRMT1. Interacts with (phosphorylated) DYNLL1; specifically binds DYNLL1 phosphorylated at 'Ser-88' and promotes its recruitment to double stand breaks (DSBs). (Microbial infection) Interacts (via C-terminus) with Epstein-Barr virus lytic switch protein BZLF1 (via C-terminus); this interaction is involved in the activation of the viral lytic cycle. Asymmetrically dimethylated on Arg residues by PRMT1. Methylation is required for DNA binding. Post-translationally, phosphorylated at basal level in the absence of DNA damage. Phosphorylated by ATM in response to DNA damage: phosphorylation at different sites promotes interaction with different set of proteins: phosphorylation at the N-terminus by ATM (residues from 6-178) promotes interaction with PAXIP1 and non-homologous end joining (NHEJ) of dysfunctional telomeres. Phosphorylation by ATM at residues that are located more C-terminus (residues 300-650) leads to promote interaction with RIF1. Interaction with RIF1 leads to disrupt interaction with NUDT16L1/TIRR. Phosphorylation at Thr-1609 and Ser-1618 in the UDR motif blocks interaction with H2AK15ub. Dephosphorylated by PPP4C. Hyperphosphorylation during mitosis correlates with its exclusion from chromatin and DNA lesions. Hyperphosphorylated in an ATR-dependent manner in response to DNA damage induced by UV irradiation. Dephosphorylated by PPP5C. Phosphorylation at Ser-366 and Thr-670 promotes interaction with TOPBP1. Phosphorylated by VRK1. In terms of processing, monoubiquitinated at Lys-1685 by MSL2 is reponse to DNA damage, leading to its stabilization.

It is found in the nucleus. The protein resides in the chromosome. The protein localises to the centromere. It localises to the kinetochore. Its function is as follows. Double-strand break (DSB) repair protein involved in response to DNA damage, telomere dynamics and class-switch recombination (CSR) during antibody genesis. Plays a key role in the repair of double-strand DNA breaks (DSBs) in response to DNA damage by promoting non-homologous end joining (NHEJ)-mediated repair of DSBs and specifically counteracting the function of the homologous recombination (HR) repair protein BRCA1. In response to DSBs, phosphorylation by ATM promotes interaction with RIF1 and dissociation from NUDT16L1/TIRR, leading to recruitment to DSBs sites. Recruited to DSBs sites by recognizing and binding histone H2A monoubiquitinated at 'Lys-15' (H2AK15Ub) and histone H4 dimethylated at 'Lys-20' (H4K20me2), two histone marks that are present at DSBs sites. Required for immunoglobulin class-switch recombination (CSR) during antibody genesis, a process that involves the generation of DNA DSBs. Participates in the repair and the orientation of the broken DNA ends during CSR. In contrast, it is not required for classic NHEJ and V(D)J recombination. Promotes NHEJ of dysfunctional telomeres via interaction with PAXIP1. In Homo sapiens (Human), this protein is TP53-binding protein 1.